Reading from the N-terminus, the 444-residue chain is Methylenetetrahydrofolate--tRNA-(uracil-5-)-methyltransferase TrmFO (444 aa).

10–15 is a binding site for FAD; it reads GAGLAG.

The protein belongs to the MnmG family. TrmFO subfamily. The cofactor is FAD.

It localises to the cytoplasm. It carries out the reaction uridine(54) in tRNA + (6R)-5,10-methylene-5,6,7,8-tetrahydrofolate + NADH + H(+) = 5-methyluridine(54) in tRNA + (6S)-5,6,7,8-tetrahydrofolate + NAD(+). The enzyme catalyses uridine(54) in tRNA + (6R)-5,10-methylene-5,6,7,8-tetrahydrofolate + NADPH + H(+) = 5-methyluridine(54) in tRNA + (6S)-5,6,7,8-tetrahydrofolate + NADP(+). Functionally, catalyzes the folate-dependent formation of 5-methyl-uridine at position 54 (M-5-U54) in all tRNAs. In Streptococcus agalactiae serotype Ia (strain ATCC 27591 / A909 / CDC SS700), this protein is Methylenetetrahydrofolate--tRNA-(uracil-5-)-methyltransferase TrmFO.